A 506-amino-acid polypeptide reads, in one-letter code: FAD-linked oxidoreductase chry5 (506 aa).

Positions 1-17 are cleaved as a signal peptide; the sequence is MHLQALTGLATLAVTAA. The 183-residue stretch at 59 to 241 folds into the FAD-binding PCMH-type domain; the sequence is LDKPTVNIVA…TSVTSKTYDA (183 aa). Residues N205, N272, N281, N389, and N431 are each glycosylated (N-linked (GlcNAc...) asparagine).

The protein belongs to the oxygen-dependent FAD-linked oxidoreductase family. It depends on FAD as a cofactor.

Its pathway is pigment biosynthesis. FAD-linked oxidoreductase; part of the gene cluster that mediates the biosynthesis of the yellow pigment chrysogine. Pyruvic acid and anthranilic acid are likely substrates for the nonribosomal peptide synthetase chry1/NRPS14, with pyruvic acid adenylated by the first A domain and anthranilic acid by the second. If pyruvic acid and anthranilic acid are merged and released from chry1/NRPS14 by hydrolysis, a subsequent amidation would lead to 2-pyruvoylaminobenzamide. This process is probably catalyzed by the amidotransferase chry2 using glutamine as amino donor. The dehydrogenase chry5 that has a terminal berberine bridge domain for C-N cyclization could catalyze the cyclization of 2-pyruvoylaminobenzamide to yield acetyl-4(3H)-quinazolidinone. A final reduction of acetyl-4(3H)-quinazolidinone catalyzed by the oxidoreductase chry4 would result in chrysogine. In Gibberella zeae (strain ATCC MYA-4620 / CBS 123657 / FGSC 9075 / NRRL 31084 / PH-1) (Wheat head blight fungus), this protein is FAD-linked oxidoreductase chry5.